Consider the following 163-residue polypeptide: ATP synthase subunit b 1 (163 aa).

A helical membrane pass occupies residues 5–25; that stretch reads LDATFFAFVGLVLFLALVVYL.

This sequence belongs to the ATPase B chain family. In terms of assembly, F-type ATPases have 2 components, F(1) - the catalytic core - and F(0) - the membrane proton channel. F(1) has five subunits: alpha(3), beta(3), gamma(1), delta(1), epsilon(1). F(0) has three main subunits: a(1), b(2) and c(10-14). The alpha and beta chains form an alternating ring which encloses part of the gamma chain. F(1) is attached to F(0) by a central stalk formed by the gamma and epsilon chains, while a peripheral stalk is formed by the delta and b chains.

Its subcellular location is the cell inner membrane. F(1)F(0) ATP synthase produces ATP from ADP in the presence of a proton or sodium gradient. F-type ATPases consist of two structural domains, F(1) containing the extramembraneous catalytic core and F(0) containing the membrane proton channel, linked together by a central stalk and a peripheral stalk. During catalysis, ATP synthesis in the catalytic domain of F(1) is coupled via a rotary mechanism of the central stalk subunits to proton translocation. Its function is as follows. Component of the F(0) channel, it forms part of the peripheral stalk, linking F(1) to F(0). In Rhizobium etli (strain CIAT 652), this protein is ATP synthase subunit b 1.